The chain runs to 123 residues: Alpha-lactalbumin A (123 aa).

Positions 1-123 (KQFTKCELSQ…KLEQWLCEEL (123 aa)) constitute a C-type lysozyme domain. Disulfide bonds link Cys-6/Cys-120, Cys-28/Cys-111, Cys-61/Cys-77, and Cys-73/Cys-91. Ca(2+) is bound by residues Lys-79, Asp-82, Asp-84, Asp-87, and Asp-88.

It belongs to the glycosyl hydrolase 22 family. In terms of assembly, lactose synthase (LS) is a heterodimer of a catalytic component, beta1,4-galactosyltransferase (beta4Gal-T1) and a regulatory component, alpha-lactalbumin (LA). As to expression, mammary gland specific. Secreted in milk.

The protein localises to the secreted. Its function is as follows. Regulatory subunit of lactose synthase, changes the substrate specificity of galactosyltransferase in the mammary gland making glucose a good acceptor substrate for this enzyme. This enables LS to synthesize lactose, the major carbohydrate component of milk. In other tissues, galactosyltransferase transfers galactose onto the N-acetylglucosamine of the oligosaccharide chains in glycoproteins. The polypeptide is Alpha-lactalbumin A (Equus caballus (Horse)).